A 56-amino-acid polypeptide reads, in one-letter code: MAKKGATLLVKLVSSEGTGYFYVKKRDPKKLVQKLSFRKYDPVARKHVLFKEEKLR.

This sequence belongs to the bacterial ribosomal protein bL33 family.

This Anaplasma phagocytophilum (strain HZ) protein is Large ribosomal subunit protein bL33.